The following is a 776-amino-acid chain: Ion-translocating oxidoreductase complex subunit C (776 aa).

2 4Fe-4S ferredoxin-type domains span residues 368 to 397 (MGAPQEEQHCIRCSACADACPADLLPQQLY) and 407 to 436 (KATAHNLADCIECGACAYVCPSNIPLVQYF). [4Fe-4S] cluster is bound by residues Cys377, Cys380, Cys383, Cys387, Cys416, Cys419, Cys422, and Cys426. Composition is skewed to basic and acidic residues over residues 534–543 (ARARQAEKVQ), 597–611 (ADEKPAEPIDPRKAA), 633–647 (ADEKPAEPIDPRKAA), 669–683 (ADEKPAEPIDPRKAA), and 705–719 (ADEKPAEPIDPRKAT). A disordered region spans residues 534–754 (ARARQAEKVQ…ENEAEDPRKA (221 aa)). The segment covering 721–743 (EAAIARAKARKAAQAGERAQAAN) has biased composition (low complexity).

This sequence belongs to the 4Fe4S bacterial-type ferredoxin family. RnfC subfamily. The complex is composed of six subunits: RnfA, RnfB, RnfC, RnfD, RnfE and RnfG. [4Fe-4S] cluster is required as a cofactor.

It is found in the cell inner membrane. Part of a membrane-bound complex that couples electron transfer with translocation of ions across the membrane. The polypeptide is Ion-translocating oxidoreductase complex subunit C (Cronobacter sakazakii (strain ATCC BAA-894) (Enterobacter sakazakii)).